The chain runs to 379 residues: UDP-N-acetylglucosamine--N-acetylmuramyl-(pentapeptide) pyrophosphoryl-undecaprenol N-acetylglucosamine transferase (379 aa).

UDP-N-acetyl-alpha-D-glucosamine is bound by residues 10-12 (TGG), asparagine 124, and arginine 165. Positions 174-195 (TRDQGPGIRDQEKHMTDSTGPA) are disordered. Positions 211, 266, and 311 each coordinate UDP-N-acetyl-alpha-D-glucosamine.

The protein belongs to the glycosyltransferase 28 family. MurG subfamily.

It is found in the cell inner membrane. It carries out the reaction di-trans,octa-cis-undecaprenyl diphospho-N-acetyl-alpha-D-muramoyl-L-alanyl-D-glutamyl-meso-2,6-diaminopimeloyl-D-alanyl-D-alanine + UDP-N-acetyl-alpha-D-glucosamine = di-trans,octa-cis-undecaprenyl diphospho-[N-acetyl-alpha-D-glucosaminyl-(1-&gt;4)]-N-acetyl-alpha-D-muramoyl-L-alanyl-D-glutamyl-meso-2,6-diaminopimeloyl-D-alanyl-D-alanine + UDP + H(+). The protein operates within cell wall biogenesis; peptidoglycan biosynthesis. In terms of biological role, cell wall formation. Catalyzes the transfer of a GlcNAc subunit on undecaprenyl-pyrophosphoryl-MurNAc-pentapeptide (lipid intermediate I) to form undecaprenyl-pyrophosphoryl-MurNAc-(pentapeptide)GlcNAc (lipid intermediate II). This Pelobacter propionicus (strain DSM 2379 / NBRC 103807 / OttBd1) protein is UDP-N-acetylglucosamine--N-acetylmuramyl-(pentapeptide) pyrophosphoryl-undecaprenol N-acetylglucosamine transferase.